Consider the following 32-residue polypeptide: PRRRRASSGRPVRRRRRPKMSRRRRRGGRRRR.

Residues 1-32 (PRRRRASSGRPVRRRRRPKMSRRRRRGGRRRR) are disordered.

Testis.

It localises to the nucleus. The protein localises to the chromosome. Its function is as follows. Protamines substitute for histones in the chromatin of sperm during the haploid phase of spermatogenesis. They compact sperm DNA into a highly condensed, stable and inactive complex. The polypeptide is Protamine-1 (Esox lucius (Northern pike)).